Here is a 236-residue protein sequence, read N- to C-terminus: Purine nucleoside phosphorylase DeoD-type (236 aa).

A purine D-ribonucleoside is bound at residue H4. Residues G20, R24, R43, and 87 to 90 (RVGT) each bind phosphate. A purine D-ribonucleoside contacts are provided by residues 178 to 180 (EME) and 202 to 203 (SD). D203 serves as the catalytic Proton donor.

Belongs to the PNP/UDP phosphorylase family. As to quaternary structure, homohexamer; trimer of homodimers.

It carries out the reaction a purine D-ribonucleoside + phosphate = a purine nucleobase + alpha-D-ribose 1-phosphate. The catalysed reaction is a purine 2'-deoxy-D-ribonucleoside + phosphate = a purine nucleobase + 2-deoxy-alpha-D-ribose 1-phosphate. Its function is as follows. Catalyzes the reversible phosphorolytic breakdown of the N-glycosidic bond in the beta-(deoxy)ribonucleoside molecules, with the formation of the corresponding free purine bases and pentose-1-phosphate. The protein is Purine nucleoside phosphorylase DeoD-type of Geobacillus kaustophilus (strain HTA426).